A 61-amino-acid polypeptide reads, in one-letter code: MTLEEKIGQMSQIDARRIGAATALEVRGFLISDSQGIDRHNLIPMSRIDDAVSRKSLVLLK.

D33 serves as the catalytic Proton donor/acceptor. D33 is a binding site for D-glucose.

It belongs to the glycosyl hydrolase 3 family. As to quaternary structure, monomer. Glycosylated. In terms of tissue distribution, expressed in petioles and leaves, but not in fruits.

It catalyses the reaction protodioscin + H2O = 26-deglucoprotodioscin + D-glucose. With respect to regulation, inhibited by Hg(2+) and D-glucono-1,5-lactone. Its function is as follows. Beta-glucosidase highly specific for the cleavage of C-26-bound glucose moiety of furostanol glycosides torvosides A and H. Hydrolyzes only p-nitrophenyl-beta-glucoside, but not p-nitrophenyl-beta-D-fucoside, p-nitrophenyl-beta-L-fucoside, p-nitrophenyl-beta-D-xyloside, p-nitrophenyl-beta-D-galactoside, p-nitrophenyl-beta-D-NAc-glucosamine, p-nitrophenyl-beta-D-mannoside or any of the p-nitrophenyl-alpha-glycosides tested. In Solanum torvum (Turkey berry), this protein is Furostanol glycoside 26-O-beta-glucosidase.